The following is a 255-amino-acid chain: Acetylglutamate kinase (255 aa).

Residues 40 to 41, Arg62, and Asn153 each bind substrate; that span reads GG.

The protein belongs to the acetylglutamate kinase family. ArgB subfamily.

It is found in the cytoplasm. It catalyses the reaction N-acetyl-L-glutamate + ATP = N-acetyl-L-glutamyl 5-phosphate + ADP. It participates in amino-acid biosynthesis; L-arginine biosynthesis; N(2)-acetyl-L-ornithine from L-glutamate: step 2/4. Catalyzes the ATP-dependent phosphorylation of N-acetyl-L-glutamate. The protein is Acetylglutamate kinase of Bacillus cereus (strain ATCC 14579 / DSM 31 / CCUG 7414 / JCM 2152 / NBRC 15305 / NCIMB 9373 / NCTC 2599 / NRRL B-3711).